A 533-amino-acid chain; its full sequence is Putative adhesin P1-like protein MPN_409 (533 aa).

Disordered regions lie at residues 15–45 and 92–166; these read KNHR…GSRS and SGWR…SITP. Residues 28 to 45 show a composition bias toward low complexity; sequence TGAGSSSGTSTNTSGSRS. The span at 95-107 shows a compositional bias: basic and acidic residues; it reads RNDKNGQSDENHT.

Belongs to the adhesin P1 family.

This is Putative adhesin P1-like protein MPN_409 from Mycoplasma pneumoniae (strain ATCC 29342 / M129 / Subtype 1) (Mycoplasmoides pneumoniae).